The following is a 590-amino-acid chain: Protein ecdysoneless homolog (590 aa).

The disordered stretch occupies residues 445–464 (EDFYGVKNSDTDTDSDSLAD). Over residues 455–464 (TDTDSDSLAD) the composition is skewed to acidic residues.

Belongs to the ECD family.

The protein resides in the cytoplasm. It is found in the nucleus. In terms of biological role, involved in the regulation of carbohydrate metabolism. May act as a transcription factor. This is Protein ecdysoneless homolog from Schizosaccharomyces pombe (strain 972 / ATCC 24843) (Fission yeast).